A 364-amino-acid chain; its full sequence is Anhydro-N-acetylmuramic acid kinase (364 aa).

An ATP-binding site is contributed by 12-19 (GTSHDAID).

Belongs to the anhydro-N-acetylmuramic acid kinase family.

It carries out the reaction 1,6-anhydro-N-acetyl-beta-muramate + ATP + H2O = N-acetyl-D-muramate 6-phosphate + ADP + H(+). The protein operates within amino-sugar metabolism; 1,6-anhydro-N-acetylmuramate degradation. It participates in cell wall biogenesis; peptidoglycan recycling. Functionally, catalyzes the specific phosphorylation of 1,6-anhydro-N-acetylmuramic acid (anhMurNAc) with the simultaneous cleavage of the 1,6-anhydro ring, generating MurNAc-6-P. Is required for the utilization of anhMurNAc either imported from the medium or derived from its own cell wall murein, and thus plays a role in cell wall recycling. The protein is Anhydro-N-acetylmuramic acid kinase of Gamma-proteobacterium EBAC31A08.